A 1083-amino-acid chain; its full sequence is Kinesin-like protein klp-19 (1083 aa).

Residues 6-328 (SLRVVVRARP…LRYADRAKQI (323 aa)) form the Kinesin motor domain. 85 to 92 (GQTGSGKT) provides a ligand contact to ATP. Residues 408-435 (MSALTQKNSRLEEDKAKLQSMLTDVRNT) are a coiled coil. Residues 458 to 471 (TEESTTLADDDNDE) are compositionally biased toward acidic residues. The interval 458 to 479 (TEESTTLADDDNDETALGGQDD) is disordered. Positions 487–650 (LPELQAELDD…KSKLQKREND (164 aa)) form a coiled coil. Polar residues predominate over residues 1044-1055 (DDSQPSPSNSTF). The interval 1044–1083 (DDSQPSPSNSTFVIGAAPTSEADGVPPIKRKSRRTDLGPL) is disordered.

The protein belongs to the TRAFAC class myosin-kinesin ATPase superfamily. Kinesin family. In terms of tissue distribution, expressed in the gonad.

It is found in the nucleus. The protein resides in the nucleoplasm. The protein localises to the cytoplasm. Its subcellular location is the cytoskeleton. It localises to the spindle. It is found in the chromosome. Functionally, required for chromosome movement and orientation on spindle poles in mitosis and meiosis. May play a role in early anterior-posterior chromosome movement in mitotic embryos. The polypeptide is Kinesin-like protein klp-19 (Caenorhabditis elegans).